Here is a 317-residue protein sequence, read N- to C-terminus: 3',5'-bisphosphate nucleotidase (317 aa).

Asp46 (proton acceptor) is an active-site residue. The Mg(2+) site is built by Glu69, Asp118, Ile120, and Asp121. Residue Thr123 is the Proton acceptor of the active site. Thr123 contacts adenosine 3',5'-bisphosphate. AMP is bound by residues Ser198, His203, Ser227, Lys230, Arg244, Tyr251, and Asp257. His203, Ser227, Lys230, and Arg244 together coordinate adenosine 3',5'-bisphosphate. Asp257 is a binding site for Mg(2+). Adenosine 3',5'-bisphosphate is bound at residue Asp257.

This sequence belongs to the inositol monophosphatase superfamily. Monomer. Mg(2+) serves as cofactor.

The protein resides in the cytoplasm. It carries out the reaction adenosine 3',5'-bisphosphate + H2O = AMP + phosphate. The catalysed reaction is 1D-myo-inositol 1,4-bisphosphate + H2O = 1D-myo-inositol 4-phosphate + phosphate. Inhibited by Li(2+). Functionally, phosphatase that converts 3'-phosphoadenosine 5'-phosphate (PAP) to AMP. Is also able to hydrolyze inositol 1,4-bisphosphate but with less efficiency. The protein is 3',5'-bisphosphate nucleotidase of Entamoeba histolytica (strain ATCC 30459 / HM-1:IMSS / ABRM).